The chain runs to 211 residues: MSFKAAEVSSLSERINWEKVDGLVPAIVQDFQSSQVLMMGYMNQDALAKTGETGQVTFFSRTKERLWTKGETSGNVLQLVNISLDCDNDTLLVRVNPIGPTCHTGTTTCWDGDAQEESQMVWLHQLEQLLAARKSADPDSSYTASLYARGTKRISQKVGEEGVEVALAATSGDKAELVCESADLIYHLLVLLQDQGLSMNDVVNKLKERHK.

Positions 1–122 (MSFKAAEVSS…DAQEESQMVW (122 aa)) are phosphoribosyl-AMP cyclohydrolase. The tract at residues 123–211 (LHQLEQLLAA…VVNKLKERHK (89 aa)) is phosphoribosyl-ATP pyrophosphohydrolase.

In the N-terminal section; belongs to the PRA-CH family. The protein in the C-terminal section; belongs to the PRA-PH family.

It localises to the cytoplasm. It catalyses the reaction 1-(5-phospho-beta-D-ribosyl)-ATP + H2O = 1-(5-phospho-beta-D-ribosyl)-5'-AMP + diphosphate + H(+). It carries out the reaction 1-(5-phospho-beta-D-ribosyl)-5'-AMP + H2O = 1-(5-phospho-beta-D-ribosyl)-5-[(5-phospho-beta-D-ribosylamino)methylideneamino]imidazole-4-carboxamide. It functions in the pathway amino-acid biosynthesis; L-histidine biosynthesis; L-histidine from 5-phospho-alpha-D-ribose 1-diphosphate: step 2/9. Its pathway is amino-acid biosynthesis; L-histidine biosynthesis; L-histidine from 5-phospho-alpha-D-ribose 1-diphosphate: step 3/9. The protein is Histidine biosynthesis bifunctional protein HisIE of Vibrio parahaemolyticus serotype O3:K6 (strain RIMD 2210633).